The sequence spans 224 residues: Response regulator protein GraR (224 aa).

Residues 2–115 form the Response regulatory domain; the sequence is QILLVEDDNT…VLIAKLQAIY (114 aa). D51 carries the post-translational modification 4-aspartylphosphate. The segment at residues 126–224 is a DNA-binding region (ompR/PhoB-type); that stretch reads KRTLTWQDAV…KVGKGYMAHE (99 aa). Phosphothreonine is present on residues T128, T130, and T149.

Interacts with GraX. In terms of processing, phosphorylated by GraS. Phosphorylated by Stk1; phosphorylation increases the DNA-binding activity of GraR.

It localises to the cytoplasm. Functionally, member of the two-component regulatory system GraR/GraS involved in resistance against cationic antimicrobial peptides (CAMPs). Upon phosphorylation by GraS, functions as a transcription regulator by direct binding to promoter regions of target genes such as adhesins, exoproteins, transporters, toxins, and proteins involved in cell wall synthesis. Down-regulates the expression of many genes involved in RNA and amino acid synthesis or glycolysis. This chain is Response regulator protein GraR (graR), found in Staphylococcus aureus (strain MRSA252).